We begin with the raw amino-acid sequence, 207 residues long: Dephospho-CoA kinase (207 aa).

The region spanning 4 to 203 is the DPCK domain; the sequence is VIGLTGGIAS…EEGYIEKPNY (200 aa). 12–17 is a binding site for ATP; sequence ASGKST.

It belongs to the CoaE family.

It localises to the cytoplasm. It catalyses the reaction 3'-dephospho-CoA + ATP = ADP + CoA + H(+). It functions in the pathway cofactor biosynthesis; coenzyme A biosynthesis; CoA from (R)-pantothenate: step 5/5. Catalyzes the phosphorylation of the 3'-hydroxyl group of dephosphocoenzyme A to form coenzyme A. This chain is Dephospho-CoA kinase, found in Staphylococcus aureus (strain MRSA252).